The following is a 180-amino-acid chain: CD-NTase/cGAS isopeptidase (180 aa).

In terms of domain architecture, MPN spans 33-165 (IVISSSTIEQ…AGSYSLSASV (133 aa)). Glu-54 functions as the Proton donor/acceptor in the catalytic mechanism. Zn(2+)-binding residues include His-115, His-117, and Asp-128.

It belongs to the peptidase M67B family. Cap3 isopeptidase subfamily.

In terms of biological role, metalloprotease priming reversal component of a CBASS antivirus system. CBASS (cyclic oligonucleotide-based antiphage signaling system) provides immunity against bacteriophages. The CD-NTase protein (CdnD) synthesizes cyclic nucleotides in response to infection; these serve as specific second messenger signals. The signals activate a diverse range of effectors, leading to bacterial cell death and thus abortive phage infection. A type II-C(AAG) CBASS system. Its function is as follows. Reverses the primed state of DncV, the CD-NTase. Cleaves a CdnD-GFP (green fluorescent protein) fusion protein precisely at the C-terminus of CdnD. Overexpression decreases the efficacy of CBASS protection against phage T2. Antagonism of phage defense upon overexpression is CBASS-system specific, Cap3 from this bacteria only antagonizes its cognate CBASS system and not that of C.freundii, E.coli or V.cholerae. Protects E.coli against phage T2 infection. When the cdnD-cap2-cap3-cap4 operon is introduced in E.coli there is a more than 10(3) decrease in the efficiency of T2 plaque formation. The operon does not protect against phage T5 and only about 10-fold against T7. In Enterobacter hormaechei subsp. hoffmannii (strain UCI 50), this protein is CD-NTase/cGAS isopeptidase.